A 185-amino-acid polypeptide reads, in one-letter code: Male-enhanced antigen 1 (185 aa).

Disordered regions lie at residues 1 to 90 (MGPE…VGDG) and 104 to 134 (GLHL…IPMD). Acidic residues-rich tracts occupy residues 50–60 (SSEEPEEEQEE) and 112–121 (LESEDEDEEG). At Ser-114 the chain carries Phosphoserine.

As to expression, highly expressed in testis.

May play an important role in spermatogenesis and/or testis development. This chain is Male-enhanced antigen 1 (MEA1), found in Homo sapiens (Human).